Consider the following 392-residue polypeptide: ERBB-3 BINDING PROTEIN 1 (392 aa).

2 necessary for nucleolar localization regions span residues 1 to 50 (MSSD…IVDI) and 298 to 392 (HLQP…NAQE). Positions 48–56 (VDICEKGDS) are RNA-binding. The interval 355 to 372 (GIKKKKGGGKKKKAQKAG) is interaction with RNA. The short motif at 357-367 (KKKKGGGKKKK) is the Nuclear localization signal element. Residues 358–369 (KKKGGGKKKKAQ) are compositionally biased toward basic residues. The segment at 358–392 (KKKGGGKKKKAQKAGEKGEASTEAEPMDASSNAQE) is disordered.

It belongs to the peptidase M24 family. Component of a ribonucleoprotein complex. Interacts with REIL1 and REIL2. As to expression, strongly expressed in calls, roots and flowers, to a lower extent, in stems and siliques, but hardly detectable in leaves.

Its subcellular location is the nucleus. Binds RNA. Associates with 28S, 18S and 5.8S mature rRNAs, several rRNA precursors and probably U3 small nucleolar RNA. May be involved in regulation of intermediate and late steps of rRNA processing. May be involved in ribosome assembly. Required for expression of cell cycle genes such as CYCD3-1, RNR2A and CDKB1-1. Promotes, in a dose- and auxin-dependent manner, organ growth by stimulating both cell proliferation and expansion, via the regulation of RBR1 levels. This Arabidopsis thaliana (Mouse-ear cress) protein is ERBB-3 BINDING PROTEIN 1.